Here is a 194-residue protein sequence, read N- to C-terminus: Dephospho-CoA kinase (194 aa).

The region spanning 3–194 is the DPCK domain; that stretch reads IVGLTGSIGM…RAIVDDLRAG (192 aa). 11–16 provides a ligand contact to ATP; it reads GMGKST.

The protein belongs to the CoaE family.

The protein localises to the cytoplasm. It catalyses the reaction 3'-dephospho-CoA + ATP = ADP + CoA + H(+). It participates in cofactor biosynthesis; coenzyme A biosynthesis; CoA from (R)-pantothenate: step 5/5. Its function is as follows. Catalyzes the phosphorylation of the 3'-hydroxyl group of dephosphocoenzyme A to form coenzyme A. The sequence is that of Dephospho-CoA kinase from Rhizobium meliloti (strain 1021) (Ensifer meliloti).